Here is a 753-residue protein sequence, read N- to C-terminus: 5-methyltetrahydropteroyltriglutamate--homocysteine methyltransferase (753 aa).

5-methyltetrahydropteroyltri-L-glutamate-binding positions include 17-20 and lysine 117; that span reads RELK. L-homocysteine contacts are provided by residues 431-433 and glutamate 484; that span reads IGS. Residues 431–433 and glutamate 484 each bind L-methionine; that span reads IGS. Residues 515 to 516 and tryptophan 561 each bind 5-methyltetrahydropteroyltri-L-glutamate; that span reads RC. An L-homocysteine-binding site is contributed by aspartate 599. Aspartate 599 serves as a coordination point for L-methionine. Glutamate 605 lines the 5-methyltetrahydropteroyltri-L-glutamate pocket. Residues histidine 641, cysteine 643, and glutamate 665 each coordinate Zn(2+). Catalysis depends on histidine 694, which acts as the Proton donor. Cysteine 726 lines the Zn(2+) pocket.

Belongs to the vitamin-B12 independent methionine synthase family. Zn(2+) serves as cofactor.

It catalyses the reaction 5-methyltetrahydropteroyltri-L-glutamate + L-homocysteine = tetrahydropteroyltri-L-glutamate + L-methionine. The protein operates within amino-acid biosynthesis; L-methionine biosynthesis via de novo pathway; L-methionine from L-homocysteine (MetE route): step 1/1. In terms of biological role, catalyzes the transfer of a methyl group from 5-methyltetrahydrofolate to homocysteine resulting in methionine formation. In Citrobacter koseri (strain ATCC BAA-895 / CDC 4225-83 / SGSC4696), this protein is 5-methyltetrahydropteroyltriglutamate--homocysteine methyltransferase.